The primary structure comprises 638 residues: Phosphomethylpyrimidine synthase (638 aa).

Substrate contacts are provided by residues N243, M272, Y301, H337, 357–359, 398–401, and E437; these read SRG and DGLR. Position 441 (H441) interacts with Zn(2+). Y464 is a binding site for substrate. H505 lines the Zn(2+) pocket. 3 residues coordinate [4Fe-4S] cluster: C585, C588, and C593.

It belongs to the ThiC family. As to quaternary structure, homodimer. [4Fe-4S] cluster is required as a cofactor.

The enzyme catalyses 5-amino-1-(5-phospho-beta-D-ribosyl)imidazole + S-adenosyl-L-methionine = 4-amino-2-methyl-5-(phosphooxymethyl)pyrimidine + CO + 5'-deoxyadenosine + formate + L-methionine + 3 H(+). It participates in cofactor biosynthesis; thiamine diphosphate biosynthesis. In terms of biological role, catalyzes the synthesis of the hydroxymethylpyrimidine phosphate (HMP-P) moiety of thiamine from aminoimidazole ribotide (AIR) in a radical S-adenosyl-L-methionine (SAM)-dependent reaction. The protein is Phosphomethylpyrimidine synthase of Azoarcus sp. (strain BH72).